The sequence spans 577 residues: MADYNSLYQHGLYLSPDQQDLLLAALSSNNPPSKQKQNVQKPELGTNPTNTPGQASTGSFNTSPAFDGSHQFDNLNYDESPFLDFNPELEWDFPGSENLIGELPGSATSDDHEVGEKRKDSNSNGEVNGKKRRESDDKSDDKTSKKPGRKPLTSEPTSKRKAQNRAAQRAFRERKEKHLKDLEAKVEELQKASDSANQENGLLKAQVERLQVELREYRKRLSWVTQGNALSAINSYPGNANRMSGLNNNDFMFDFPKFGDLPGGRIFNGSVAKTNQNKKDDTPIPGILRHSALQAANGRASSSASPKTVTSNNPATKSPVTADGRLTSHTSSVYNYHQPGQGHDTSTSDSPSSSSDSHQFLSSSGTSPEPSVQSPDNQAKESHEGHTCTIDGEKSFCAQLGMACGNINNPIPAVRQRSESATNTPNAPSSTDNVPGIDFMAQQNGGQFDPLLFGDWREPQDAVLSQDFNTFFDDAFPLPDLGSPSHNLTEVGLGAQQKKSILEEMDNKEEEEVVPGEDKAQMLSCTKIWDRLQSMEKFRNGEIDVDNLCSELRTKARCSEGGVVVNQRDVDDIIGRV.

Residues 25-178 (ALSSNNPPSK…RAFRERKEKH (154 aa)) form a disordered region. The span at 26–64 (LSSNNPPSKQKQNVQKPELGTNPTNTPGQASTGSFNTSP) shows a compositional bias: polar residues. Composition is skewed to basic and acidic residues over residues 109–121 (SDDHEVGEKRKDS) and 133–144 (RESDDKSDDKTS). 2 short sequence motifs (bipartite nuclear localization signal) span residues 117-124 (KRKDSNSN) and 144-151 (SKKPGRKP). The bZIP domain maps to 154–217 (SEPTSKRKAQ…ERLQVELREY (64 aa)). Residues 159–180 (KRKAQNRAAQRAFRERKEKHLK) are basic motif. The tract at residues 182–189 (LEAKVEEL) is leucine-zipper. Residues 294–386 (QAANGRASSS…NQAKESHEGH (93 aa)) are disordered. Over residues 299-319 (RASSSASPKTVTSNNPATKSP) the composition is skewed to polar residues. Residues 347–364 (TSDSPSSSSDSHQFLSSS) are compositionally biased toward low complexity. Positions 365–377 (GTSPEPSVQSPDN) are enriched in polar residues. Residues 525–558 (CTKIWDRLQSMEKFRNGEIDVDNLCSELRTKARC) form a c-CRD region. The short motif at 543–550 (IDVDNLCS) is the Nuclear export signal element.

The protein belongs to the bZIP family. YAP subfamily. Post-translationally, oxidative stress induces conformational changes through oxidation of cysteine residues, masking the nuclear export signal, thus abolishing nuclear export by CRM1/exportin 1.

It localises to the nucleus. Its subcellular location is the cytoplasm. Its function is as follows. Transcription activator involved in oxidative stress response, specifically during hyphal growth. Regulates the transcription of genes encoding antioxidant enzymes and components of the cellular thiol-reducing pathways including the mycelium-specific catalase catB (but not the conidia-specific catalase catA), thioredoxin reductase trxB and thioredoxin thiO. Preferentially binds to promoters with the core binding site 5'-TTA[CG]TAA-3'. Activity of the transcription factor is controlled through oxidation of specific cysteine residues resulting in the alteration of its subcellular location. Activation by hydroperoxides induces nuclear accumulation and as a result NapA transcriptional activity. This is AP-1-like transcription factor napA from Emericella nidulans (strain FGSC A4 / ATCC 38163 / CBS 112.46 / NRRL 194 / M139) (Aspergillus nidulans).